Reading from the N-terminus, the 126-residue chain is Histone H2B type 1-C/E/G (126 aa).

Residues 1–12 (MPEPAKSAPAPK) show a composition bias toward low complexity. The interval 1–36 (MPEPAKSAPAPKKGSKKAVTKAQKKDGKKRKRSRKE) is disordered. An N-acetylproline modification is found at Pro2. Glu3 is subject to ADP-ribosyl glutamic acid. Position 6 is an N6-(2-hydroxyisobutyryl)lysine; alternate (Lys6). Lys6 is modified (N6-(beta-hydroxybutyryl)lysine; alternate). The residue at position 6 (Lys6) is an N6-acetyllysine; alternate. Lys6 is modified (N6-butyryllysine; alternate). At Lys6 the chain carries N6-crotonyllysine; alternate. Lys6 carries the post-translational modification N6-lactoyllysine; alternate. Lys6 participates in a covalent cross-link: Glycyl lysine isopeptide (Lys-Gly) (interchain with G-Cter in SUMO2); alternate. Ser7 carries the post-translational modification ADP-ribosylserine. Lys12 is subject to N6-(beta-hydroxybutyryl)lysine; alternate. Lys12 and Lys13 each carry N6-acetyllysine; alternate. N6-crotonyllysine; alternate occurs at positions 12 and 13. Lys12 is subject to N6-lactoyllysine; alternate. Lys13 is modified (N6-(2-hydroxyisobutyryl)lysine; alternate). Ser15 carries the post-translational modification Phosphoserine; by STK4/MST1. N6-acetyllysine; alternate is present on residues Lys16, Lys17, Lys21, and Lys24. N6-crotonyllysine; alternate occurs at positions 16, 17, 21, and 24. N6-lactoyllysine; alternate is present on residues Lys16, Lys17, Lys21, and Lys24. Lys17 is modified (N6-glutaryllysine; alternate). Lys21 and Lys24 each carry N6-(2-hydroxyisobutyryl)lysine; alternate. At Lys21 the chain carries N6-(beta-hydroxybutyryl)lysine; alternate. At Lys21 the chain carries N6-butyryllysine; alternate. Lys21 participates in a covalent cross-link: Glycyl lysine isopeptide (Lys-Gly) (interchain with G-Cter in SUMO2); alternate. Lys25 bears the N6-(2-hydroxyisobutyryl)lysine mark. Residue Lys35 is modified to N6-(2-hydroxyisobutyryl)lysine; alternate. Lys35 carries the post-translational modification N6-(beta-hydroxybutyryl)lysine; alternate. Position 35 is an N6-crotonyllysine; alternate (Lys35). N6-glutaryllysine; alternate is present on Lys35. Lys35 bears the N6-succinyllysine; alternate mark. Lys35 participates in a covalent cross-link: Glycyl lysine isopeptide (Lys-Gly) (interchain with G-Cter in ubiquitin); alternate. Glu36 is subject to PolyADP-ribosyl glutamic acid. Residue Ser37 is modified to Phosphoserine; by AMPK. N6-(2-hydroxyisobutyryl)lysine; alternate is present on residues Lys44, Lys47, and Lys58. N6-lactoyllysine; alternate is present on Lys44. 2 positions are modified to N6-glutaryllysine; alternate: Lys44 and Lys47. Lys47 is subject to N6-methyllysine; alternate. At Lys58 the chain carries N6,N6-dimethyllysine; alternate. Arg80 is modified (dimethylated arginine). Lys86 carries the N6-(2-hydroxyisobutyryl)lysine; alternate modification. Lys86 carries the N6-acetyllysine; alternate modification. Lys86 carries the N6-lactoyllysine; alternate modification. N6,N6,N6-trimethyllysine; alternate is present on Lys86. 2 positions are modified to omega-N-methylarginine: Arg87 and Arg93. An N6-(2-hydroxyisobutyryl)lysine; alternate modification is found at Lys109. N6-(beta-hydroxybutyryl)lysine; alternate is present on Lys109. Lys109 carries the post-translational modification N6-lactoyllysine; alternate. Lys109 carries the N6-glutaryllysine; alternate modification. Lys109 is subject to N6-methyllysine; alternate. A glycan (O-linked (GlcNAc) serine) is linked at Ser113. Phosphothreonine is present on Thr116. 2 positions are modified to N6-(2-hydroxyisobutyryl)lysine; alternate: Lys117 and Lys121. The residue at position 117 (Lys117) is an N6-(beta-hydroxybutyryl)lysine; alternate. Lys117 and Lys121 each carry N6-lactoyllysine; alternate. 2 positions are modified to N6-glutaryllysine; alternate: Lys117 and Lys121. N6-succinyllysine; alternate is present on residues Lys117 and Lys121. Lys117 is subject to N6-methylated lysine; alternate. A Glycyl lysine isopeptide (Lys-Gly) (interchain with G-Cter in ubiquitin); alternate cross-link involves residue Lys121.

Belongs to the histone H2B family. The nucleosome is a histone octamer containing two molecules each of H2A, H2B, H3 and H4 assembled in one H3-H4 heterotetramer and two H2A-H2B heterodimers. The octamer wraps approximately 147 bp of DNA. Interacts with VRK1; the interaction is mediated by the nucleosome acidic patch, a cluster of negatively charged residues of H2A and H2B forming a cleft within the nucleosome core. Post-translationally, monoubiquitination at Lys-35 (H2BK34Ub) by the MSL1/MSL2 dimer is required for histone H3 'Lys-4' (H3K4me) and 'Lys-79' (H3K79me) methylation and transcription activation at specific gene loci, such as HOXA9 and MEIS1 loci. Similarly, monoubiquitination at Lys-121 (H2BK120Ub) by the RNF20/40 complex gives a specific tag for epigenetic transcriptional activation and is also prerequisite for histone H3 'Lys-4' and 'Lys-79' methylation. It also functions cooperatively with the FACT dimer to stimulate elongation by RNA polymerase II. H2BK120Ub also acts as a regulator of mRNA splicing: deubiquitination by USP49 is required for efficient cotranscriptional splicing of a large set of exons. Phosphorylated on Ser-15 (H2BS14ph) by STK4/MST1 during apoptosis; which facilitates apoptotic chromatin condensation. Also phosphorylated on Ser-15 in response to DNA double strand breaks (DSBs), and in correlation with somatic hypermutation and immunoglobulin class-switch recombination. Phosphorylation at Ser-37 (H2BS36ph) by AMPK in response to stress promotes transcription. In terms of processing, glcNAcylation at Ser-113 promotes monoubiquitination of Lys-121. It fluctuates in response to extracellular glucose, and associates with transcribed genes. Post-translationally, ADP-ribosylated by PARP1 or PARP2 on Ser-7 (H2BS6ADPr) in response to DNA damage. H2BS6ADPr promotes recruitment of CHD1L. Mono-ADP-ribosylated on Glu-3 (H2BE2ADPr) by PARP3 in response to single-strand breaks. Poly ADP-ribosylation on Glu-36 (H2BE35ADPr) by PARP1 regulates adipogenesis: it inhibits phosphorylation at Ser-37 (H2BS36ph), thereby blocking expression of pro-adipogenetic genes. Crotonylation (Kcr) is specifically present in male germ cells and marks testis-specific genes in post-meiotic cells, including X-linked genes that escape sex chromosome inactivation in haploid cells. Crotonylation marks active promoters and enhancers and confers resistance to transcriptional repressors. It is also associated with post-meiotically activated genes on autosomes. In terms of processing, hydroxybutyrylation of histones is induced by starvation. Post-translationally, lactylated in macrophages by EP300/P300 by using lactoyl-CoA directly derived from endogenous or exogenous lactate, leading to stimulates gene transcription.

Its subcellular location is the nucleus. It is found in the chromosome. Core component of nucleosome. Nucleosomes wrap and compact DNA into chromatin, limiting DNA accessibility to the cellular machineries which require DNA as a template. Histones thereby play a central role in transcription regulation, DNA repair, DNA replication and chromosomal stability. DNA accessibility is regulated via a complex set of post-translational modifications of histones, also called histone code, and nucleosome remodeling. This Mus musculus (Mouse) protein is Histone H2B type 1-C/E/G.